Reading from the N-terminus, the 193-residue chain is Segregation and condensation protein B (193 aa).

The protein belongs to the ScpB family. As to quaternary structure, homodimer. Homodimerization may be required to stabilize the binding of ScpA to the Smc head domains. Component of a cohesin-like complex composed of ScpA, ScpB and the Smc homodimer, in which ScpA and ScpB bind to the head domain of Smc. The presence of the three proteins is required for the association of the complex with DNA.

It is found in the cytoplasm. Functionally, participates in chromosomal partition during cell division. May act via the formation of a condensin-like complex containing Smc and ScpA that pull DNA away from mid-cell into both cell halves. The polypeptide is Segregation and condensation protein B (Shouchella clausii (strain KSM-K16) (Alkalihalobacillus clausii)).